The sequence spans 242 residues: Probable transcriptional regulatory protein MHP7448_0474 (242 aa).

The protein belongs to the TACO1 family.

It is found in the cytoplasm. This chain is Probable transcriptional regulatory protein MHP7448_0474, found in Mesomycoplasma hyopneumoniae (strain 7448) (Mycoplasma hyopneumoniae).